Consider the following 86-residue polypeptide: Haditoxin (86 aa).

Positions 1–21 are cleaved as a signal peptide; sequence MKTLLLTLVVVTIVYLDLGYT. 4 cysteine pairs are disulfide-bonded: Cys-24-Cys-45, Cys-38-Cys-62, Cys-66-Cys-78, and Cys-79-Cys-84.

It belongs to the three-finger toxin family. Short-chain subfamily. Orphan group VIII (haditoxin) sub-subfamily. As to quaternary structure, homodimer; non-covalently linked. In terms of tissue distribution, expressed by the venom gland.

Its subcellular location is the secreted. Functionally, antagonist of muscle (alpha-1-beta-1-delta-epsilon/CHRNA1-CHRNB1-CHRND-CHRNE) and neuronal (alpha-7/CHRNA7, alpha-3-beta-2/CHRNA3-CHRNB2, alpha-4-beta-2/CHRNA4-CHRNB2) nicotinic acetylcholine receptors (nAChR). The highest affinity is for human alpha-7/CHRNA7 nAChRs (IC(50)=180 nM), compared to human alpha-1-beta-1-delta-epsilon/CHRNA1-CHRNB1-CHRND-CHRNE nAChR (IC(50)= 550 nM), alpha-3-beta-2/CHRNA3-CHRNB2 nAChR (IC(50)=500 nM), and alpha-4-beta-2/CHRNA4-CHRNB2 nAChR (IC(50)=2.6 uM). The sequence is that of Haditoxin from Ophiophagus hannah (King cobra).